Reading from the N-terminus, the 154-residue chain is D-ribose pyranase 2 (154 aa).

Histidine 20 serves as the catalytic Proton donor. Substrate is bound by residues aspartate 28, histidine 98, and 121–123 (WGN).

It belongs to the RbsD / FucU family. RbsD subfamily. Homodecamer.

It localises to the cytoplasm. The enzyme catalyses beta-D-ribopyranose = beta-D-ribofuranose. It functions in the pathway carbohydrate metabolism; D-ribose degradation; D-ribose 5-phosphate from beta-D-ribopyranose: step 1/2. Catalyzes the interconversion of beta-pyran and beta-furan forms of D-ribose. This is D-ribose pyranase 2 from Rubrobacter xylanophilus (strain DSM 9941 / JCM 11954 / NBRC 16129 / PRD-1).